Consider the following 535-residue polypeptide: MFSLRPTALVSLSVVLFSIQETLSEQQPFVSPGWSDQWWHKSELESYTFPWPIQKVAIIGAGPSGLAAYHELDKAGYDVYLFERDTVPGGNWHYTDETPVKEPIPNADVSIGDFVPSLPPEGVRLPYEEHYEGNVSDELLRAHRGPKPIWNSLQTNAPPPLQQFRDHPWPADQPWLLPHAVLGKYIRAFASFNGINSNDVENPHISYNTRVELVEKCFTSTENGPMRTGWTLTLKQVSRTGTNTSKAVWTKENFDAVVVATGRFNAPYIPNILGLKAWADRFPDRIVHSRQFRRPQLYTNQTVLVVGAAASGVEIATDIAPNARAVYLSIRPRRISNSNSAGNPLSSRWMGRLPHNVSVVPEIKRFLPPTSAIALSSVELTNGTILTGIESIIFATGFRYTFPFLPQFHNTSLTNHDLEHKPKPIVTDGTHLRNLFLDILSIEEPTLGFMCMNIEIQNFKYAEYIAVALSKIWGNKATIPPVTRLWELNERRVMEKGGYGKYFQFLGFRGEREMIRLFTGWLNDAAASHGGRQVR.

The N-terminal stretch at 1–24 (MFSLRPTALVSLSVVLFSIQETLS) is a signal peptide. 60–65 (GAGPSG) serves as a coordination point for FAD. N-linked (GlcNAc...) asparagine glycosylation is found at Asn-134, Asn-243, and Asn-300. Position 307–312 (307–312 (GAAASG)) interacts with NADP(+). N-linked (GlcNAc...) asparagine glycans are attached at residues Asn-356, Asn-382, and Asn-410.

It belongs to the FMO family. FAD serves as cofactor.

It functions in the pathway secondary metabolite biosynthesis. Flavin-containing monooxygenase; part of the gene cluster that mediates the biosynthesis of the psychoactive metabolites ibotenic acid and muscimol. The first committed step is glutamate hydroxylation by the 2-oxoglutarate-dependent dioxygenase iboH, and the last step is decarboxylation of ibotenic acid to muscimol by the decarboxylase iboD. The order of the intermediate reactions is somewhat ambiguous. IboA likely activates the carboxylic acid at position 5 to introduce an amide bond, and the flavin monooxygenase iboF generates the N-O bond. There are several options for the latter step. One option is that iboF directly hydroxylates the amide nitrogen formed by iboA to produce a hydroxamic acid species. Another option is that iboF hydroxylates an external N-containing compound, whose resulting N-O bond is subsequently introduced into the hydroxyglutamate scaffold. The paralogous PLP-dependent cystathionine gamma-synthase-like enzymes iboG1 and iboG2 are likely involved in substitution of the OH group at position 3 by the O-N moiety. The first cyclic intermediate is most probably tricholomic acid which is likely desaturated to ibotenic acid by the cytochrome P450 monooxygenase iboC. The sequence is that of Flavin-containing monooxygenase iboF from Amanita muscaria (strain Koide BX008).